We begin with the raw amino-acid sequence, 88 residues long: Co-chaperonin GroES (88 aa).

Belongs to the GroES chaperonin family. Heptamer of 7 subunits arranged in a ring. Interacts with the chaperonin GroEL.

The protein resides in the cytoplasm. Together with the chaperonin GroEL, plays an essential role in assisting protein folding. The GroEL-GroES system forms a nano-cage that allows encapsulation of the non-native substrate proteins and provides a physical environment optimized to promote and accelerate protein folding. GroES binds to the apical surface of the GroEL ring, thereby capping the opening of the GroEL channel. This is Co-chaperonin GroES from Treponema pallidum (strain Nichols).